We begin with the raw amino-acid sequence, 282 residues long: Ribosome biogenesis GTPase A (282 aa).

Positions 14 to 178 (RREVTEKLKL…LLDTPGILWP (165 aa)) constitute a CP-type G domain. GTP-binding positions include 58-61 (NKAD), 86-87 (NS), 130-135 (NVGKST), and glycine 174.

The protein belongs to the TRAFAC class YlqF/YawG GTPase family. MTG1 subfamily. In terms of assembly, interacts with ctc. Interacts with the immature 50S ribosome subunit. 2 molecules of rbgA bind to one 50S subunit.

It localises to the cytoplasm. Its function is as follows. Essential protein that is required for a late step of 50S ribosomal subunit assembly. Has GTPase activity that is stimulated by interaction with the immature 50S ribosome subunit. Binds to the 23S rRNA. Required for the association of ribosomal proteins rplP and rpmA with the large subunit. This chain is Ribosome biogenesis GTPase A (rbgA), found in Bacillus spizizenii (strain ATCC 23059 / NRRL B-14472 / W23) (Bacillus subtilis subsp. spizizenii).